The chain runs to 213 residues: Nickel-cobalt-cadmium resistance protein NccN (213 aa).

4 helical membrane-spanning segments follow: residues 24-44 (IGIW…GHSQ), 48-68 (TWIS…ATVG), 113-133 (ESIT…PAVI), and 180-200 (NLAD…VELA).

It to A.eutrophus CzcN.

Its subcellular location is the cell inner membrane. Component of the NCC cation-efflux system that confers resistance to nickel, cobalt and cadmium. Appears to be involved in metal specificity but affects only nickel resistance. May be involved in nickel transport. The polypeptide is Nickel-cobalt-cadmium resistance protein NccN (nccN) (Alcaligenes xylosoxydans xylosoxydans (Achromobacter xylosoxidans)).